The following is a 93-amino-acid chain: MPLHKSAEKRLRQSEKRNARNRARKKELKVLVKTMQKLIEASAAKPEVETAYRSVVQKLDRLGVKRYIHANKASRKKSQITRDFNTYMQSAQQ.

Over residues 1–18 (MPLHKSAEKRLRQSEKRN) the composition is skewed to basic and acidic residues. The tract at residues 1 to 25 (MPLHKSAEKRLRQSEKRNARNRARK) is disordered.

It belongs to the bacterial ribosomal protein bS20 family.

Binds directly to 16S ribosomal RNA. The sequence is that of Small ribosomal subunit protein bS20 from Chlorobium chlorochromatii (strain CaD3).